The chain runs to 91 residues: Phosphocarrier protein NPr (91 aa).

In terms of domain architecture, HPr spans 3–90; the sequence is KLERQVTICN…ALVDAKFDEA (88 aa). His17 (pros-phosphohistidine intermediate) is an active-site residue.

This sequence belongs to the HPr family.

The protein resides in the cytoplasm. Its function is as follows. Component of the phosphoenolpyruvate-dependent nitrogen-metabolic phosphotransferase system (nitrogen-metabolic PTS), that seems to be involved in regulating nitrogen metabolism. The phosphoryl group from phosphoenolpyruvate (PEP) is transferred to the phosphoryl carrier protein NPr by enzyme I-Ntr. Phospho-NPr then transfers it to EIIA-Ntr. Could function in the transcriptional regulation of sigma-54 dependent operons in conjunction with the NPr (PtsO) and EIIA-Ntr (PtsN) proteins. This chain is Phosphocarrier protein NPr (ptsO), found in Shewanella violacea (strain JCM 10179 / CIP 106290 / LMG 19151 / DSS12).